A 553-amino-acid chain; its full sequence is MGSRSSTRIPVPLMLTVRVMLALSCVCPTSALDGRPLAAAGIVVTGDKAVNIYTSSQTGSIIIKLLPNMPKDKEACAKAPLEAYNRTLTTLLTPLGDSIRRIQESVTTSGGGKQGRLIGAIIGGVALGVATAAQITAASALIQANQNAANILLLKESIAATNEAVHEVTNGLSQLAVAVGKMQQFVNDQFNKTAQELDCIKITQQVGVELNLYLTELTTVFGPQITSPALTQLTIQALYNLAGGNMDYLLTKLGVGNNQLSSLISSGLITGNPILYDSQTQLLGIQVTLPSVGNLNNMRATYLETLSVSTTKGFASALVPKVVTQVGSVIEELDTSYCIETDLDLFFSRIVTFPMSPGIYSCLSGNTSACMYSKTEGALTTPYMTLKGSVIANCKMTTCRCADPPGIISQNYGEAVSLIDRQSCNMFSLDGITLRLSGEFDATYQKNISIQDSQVIVTGNLDISTELGNVNNSISNALDKLEESNSKLDKVNVKLTSTSALITYIVLTVISLVCGILSLVLACYLMYKQKAQQKTLLWLGNNTLDQMRATTKM.

The signal sequence occupies residues 1 to 31 (MGSRSSTRIPVPLMLTVRVMLALSCVCPTSA). Residues 32 to 500 (LDGRPLAAAG…VNVKLTSTSA (469 aa)) are Extracellular-facing. 4 disulfide bridges follow: cysteine 76-cysteine 199, cysteine 362-cysteine 370, cysteine 394-cysteine 399, and cysteine 401-cysteine 424. Asparagine 85 is a glycosylation site (N-linked (GlcNAc...) asparagine; by host). A fusion peptide region spans residues 117–141 (LIGAIIGGVALGVATAAQITAASAL). A coiled-coil region spans residues 142 to 170 (IQANQNAANILLLKESIAATNEAVHEVTN). 2 N-linked (GlcNAc...) asparagine; by host glycosylation sites follow: asparagine 191 and asparagine 366. 2 N-linked (GlcNAc...) asparagine; by host glycosylation sites follow: asparagine 447 and asparagine 471. Residues 466–491 (ELGNVNNSISNALDKLEESNSKLDKV) adopt a coiled-coil conformation. Residues 501–521 (LITYIVLTVISLVCGILSLVL) form a helical membrane-spanning segment. Residues 522-553 (ACYLMYKQKAQQKTLLWLGNNTLDQMRATTKM) lie on the Cytoplasmic side of the membrane. Cysteine 523 carries the S-palmitoyl cysteine; by host lipid modification.

The protein belongs to the paramyxoviruses fusion glycoprotein family. In terms of assembly, homotrimer of disulfide-linked F1-F2. The inactive precursor F0 is glycosylated and proteolytically cleaved into F1 and F2 to be functionally active. The cleavage is mediated by cellular proteases during the transport and maturation of the polypeptide.

The protein resides in the virion membrane. It localises to the host cell membrane. Class I viral fusion protein. Under the current model, the protein has at least 3 conformational states: pre-fusion native state, pre-hairpin intermediate state, and post-fusion hairpin state. During viral and plasma cell membrane fusion, the heptad repeat (HR) regions assume a trimer-of-hairpins structure, positioning the fusion peptide in close proximity to the C-terminal region of the ectodomain. The formation of this structure appears to drive apposition and subsequent fusion of viral and plasma cell membranes. Directs fusion of viral and cellular membranes leading to delivery of the nucleocapsid into the cytoplasm. This fusion is pH independent and occurs directly at the outer cell membrane. The trimer of F1-F2 (F protein) probably interacts with HN at the virion surface. Upon HN binding to its cellular receptor, the hydrophobic fusion peptide is unmasked and interacts with the cellular membrane, inducing the fusion between cell and virion membranes. Later in infection, F proteins expressed at the plasma membrane of infected cells could mediate fusion with adjacent cells to form syncytia, a cytopathic effect that could lead to tissue necrosis. The polypeptide is Fusion glycoprotein F0 (F) (Newcastle disease virus (strain Queensland/66) (NDV)).